We begin with the raw amino-acid sequence, 420 residues long: Histidine--tRNA ligase (420 aa).

It belongs to the class-II aminoacyl-tRNA synthetase family. As to quaternary structure, homodimer.

The protein resides in the cytoplasm. The enzyme catalyses tRNA(His) + L-histidine + ATP = L-histidyl-tRNA(His) + AMP + diphosphate + H(+). The protein is Histidine--tRNA ligase of Saccharopolyspora erythraea (strain ATCC 11635 / DSM 40517 / JCM 4748 / NBRC 13426 / NCIMB 8594 / NRRL 2338).